Reading from the N-terminus, the 407-residue chain is Na(+)-translocating NADH-quinone reductase subunit F (407 aa).

A helical membrane pass occupies residues 3–23 (IILGVVMFTLIVLALVLVILF). The 2Fe-2S ferredoxin-type domain maps to 32-126 (GDITISINGD…DMDIELPEEI (95 aa)). The [2Fe-2S] cluster site is built by cysteine 69, cysteine 75, cysteine 78, and cysteine 110. Positions 129 to 269 (VKKWECTVIS…SGPFGEFFAK (141 aa)) constitute an FAD-binding FR-type domain. The segment at 272–389 (DAEMVFIGGG…PMMNAAVIGM (118 aa)) is catalytic.

Belongs to the NqrF family. In terms of assembly, composed of six subunits; NqrA, NqrB, NqrC, NqrD, NqrE and NqrF. The cofactor is [2Fe-2S] cluster. It depends on FAD as a cofactor.

The protein localises to the cell inner membrane. It catalyses the reaction a ubiquinone + n Na(+)(in) + NADH + H(+) = a ubiquinol + n Na(+)(out) + NAD(+). Its function is as follows. NQR complex catalyzes the reduction of ubiquinone-1 to ubiquinol by two successive reactions, coupled with the transport of Na(+) ions from the cytoplasm to the periplasm. The first step is catalyzed by NqrF, which accepts electrons from NADH and reduces ubiquinone-1 to ubisemiquinone by a one-electron transfer pathway. This chain is Na(+)-translocating NADH-quinone reductase subunit F, found in Vibrio anguillarum (Listonella anguillarum).